Here is a 224-residue protein sequence, read N- to C-terminus: ATP-dependent dethiobiotin synthetase BioD (224 aa).

14–19 is a binding site for ATP; the sequence is GIGKTV. Residue T18 coordinates Mg(2+). Residue K39 is part of the active site. S43 is a binding site for substrate. Residues D56, 117-120, and 177-178 each bind ATP; these read EGVG and NE. Positions 56 and 117 each coordinate Mg(2+).

It belongs to the dethiobiotin synthetase family. As to quaternary structure, homodimer. It depends on Mg(2+) as a cofactor.

It localises to the cytoplasm. The enzyme catalyses (7R,8S)-7,8-diammoniononanoate + CO2 + ATP = (4R,5S)-dethiobiotin + ADP + phosphate + 3 H(+). The protein operates within cofactor biosynthesis; biotin biosynthesis; biotin from 7,8-diaminononanoate: step 1/2. Its function is as follows. Catalyzes a mechanistically unusual reaction, the ATP-dependent insertion of CO2 between the N7 and N8 nitrogen atoms of 7,8-diaminopelargonic acid (DAPA, also called 7,8-diammoniononanoate) to form a ureido ring. The sequence is that of ATP-dependent dethiobiotin synthetase BioD from Xanthomonas campestris pv. campestris (strain ATCC 33913 / DSM 3586 / NCPPB 528 / LMG 568 / P 25).